The following is a 144-amino-acid chain: MYSEIQRERADIGGLMARPEYREWNPELIKPKKLLNPVKASRSHQELHRELLMNHRRGLGVDSKPELQRVLEHRRRNQLIKKKKEELEAKRLQCPFEQELLRRQQRLNQLEKPPEKEEDHAPEFIKVRENLRRIATLTSEEREL.

Residues 66–112 adopt a coiled-coil conformation; that stretch reads ELQRVLEHRRRNQLIKKKKEELEAKRLQCPFEQELLRRQQRLNQLEK. A Nuclear localization signal motif is present at residues 74-84; sequence RRRNQLIKKKK. The tract at residues 105–124 is disordered; the sequence is QRLNQLEKPPEKEEDHAPEF. The segment covering 112-124 has biased composition (basic and acidic residues); the sequence is KPPEKEEDHAPEF.

The protein belongs to the FAM107 family. Interacts with ACTB. Interacts with COMMD1; this interaction stabilizes COMMD1 in the nucleus. Interacts with MAP1A. Interacts with PRDX1. Interacts with F-actin. In terms of tissue distribution, widely expressed. Expressed in neurons. Expressed in malignant glial tumors. Expression is reduced or absent in a number of cancer cell lines.

The protein localises to the nucleus. The protein resides in the cytoplasm. It localises to the cytoskeleton. Its subcellular location is the stress fiber. It is found in the cell junction. The protein localises to the focal adhesion. The protein resides in the cell projection. It localises to the ruffle membrane. Its subcellular location is the synapse. In terms of biological role, stress-inducible actin-binding protein that plays a role in synaptic and cognitive functions by modulating actin filamentous (F-actin) dynamics. Mediates polymerization of globular actin to F-actin. Also binds to, stabilizes and bundles F-actin. Involved in synaptic function by regulating neurite outgrowth in an actin-dependent manner and for the acquisition of hippocampus-dependent cognitive function, such as learning and long-term memory. Plays a role in the actin and microtubule cytoskeleton organization; negatively regulates focal adhesion (FA) assembly promoting malignant glial cell migration in an actin-, microtubule- and MAP1A-dependent manner. Also involved in neuroblastoma G1/S phase cell cycle progression and cell proliferation inhibition by stimulating ubiquitination of NF-kappa-B subunit RELA and NF-kappa-B degradation in a COMMD1- and actin-dependent manner. May play a role in tumor development. In Homo sapiens (Human), this protein is Actin-associated protein FAM107A.